The sequence spans 382 residues: Putative phospholipase A1 (382 aa).

The first 27 residues, 1-27 (MPTMGAEMNTRNMRYILLTGLLPMASA), serve as a signal peptide directing secretion. Residues 28–65 (FGETALQCAALTDNVTRLACYDRIFAAQLPSSAGQEGQ) are Periplasmic-facing. A beta stranded transmembrane segment spans residues 66-78 (ESKAVLNLTETVR). At 79 to 168 (SSLDKGEAVI…VQEKFGQQKR (90 aa)) the chain is on the extracellular side. Residues 169–183 (AETKLQVSFKSKIAE) traverse the membrane as a beta stranded segment. At 184–189 (DLFKTR) the chain is on the periplasmic side. The chain crosses the membrane as a beta stranded span at residues 190–202 (ADLWFGYTQRSDW). Residues 203–213 (QIYNQGRKSAP) lie on the Extracellular side of the membrane. Serine 211 is a binding site for Ca(2+). Residues 214-233 (FRNTDYKPEIFLTQPVKADL) traverse the membrane as a beta stranded segment. Topologically, residues 234-236 (PFG) are periplasmic. A beta stranded membrane pass occupies residues 237–250 (GRLRMLGAGFVHQS). Histidine 248 functions as the Proton acceptor in the catalytic mechanism. The active-site Nucleophile is serine 250. Residues 251–259 (NGQSRPESR) lie on the Extracellular side of the membrane. Residue serine 258 coordinates Ca(2+). The beta stranded transmembrane segment at 260 to 272 (SWNRIYAMAGMEW) threads the bilayer. The Periplasmic portion of the chain corresponds to 273 to 274 (GK). Residues 275–284 (LTVIPRVWVR) traverse the membrane as a beta stranded segment. Over 285–306 (AFDQSGDKNDNPDIADYMGYGD) the chain is Extracellular. Aspartate 294 contacts Ca(2+). The beta stranded transmembrane segment at 307–313 (VKLQYRL) threads the bilayer. Topologically, residues 314–315 (ND) are periplasmic. Residues 316 to 325 (RQNVYSVLRY) traverse the membrane as a beta stranded segment. The Extracellular portion of the chain corresponds to 326–332 (NPKTGYG). Residues 333–341 (AIEAAYTFP) traverse the membrane as a beta stranded segment. Residues 342–346 (IKGKL) are Periplasmic-facing. The beta stranded transmembrane segment at 347 to 356 (KGVVRGFHGY) threads the bilayer. Topologically, residues 357–365 (GESLIDYNH) are extracellular. The chain crosses the membrane as a beta stranded span at residues 366–377 (KQNGIGIGLMFN). At 378 to 382 (DLDGI) the chain is on the periplasmic side.

Belongs to the phospholipase A1 family. In terms of assembly, homodimer; dimerization is reversible, and the dimeric form is the active one. Requires Ca(2+) as cofactor.

It localises to the cell outer membrane. It carries out the reaction a 1,2-diacyl-sn-glycero-3-phosphocholine + H2O = a 2-acyl-sn-glycero-3-phosphocholine + a fatty acid + H(+). The enzyme catalyses a 1,2-diacyl-sn-glycero-3-phosphocholine + H2O = a 1-acyl-sn-glycero-3-phosphocholine + a fatty acid + H(+). Its function is as follows. Hydrolysis of phosphatidylcholine with phospholipase A2 (EC 3.1.1.4) and phospholipase A1 (EC 3.1.1.32) activities. The sequence is that of Putative phospholipase A1 from Neisseria meningitidis serogroup B (strain ATCC BAA-335 / MC58).